The primary structure comprises 168 residues: Plastocyanin, chloroplastic (168 aa).

The N-terminal 69 residues, 1 to 69 (MATVTSTTVA…SAVLASNALA (69 aa)), are a transit peptide targeting the chloroplast. In terms of domain architecture, Plastocyanin-like spans 70 to 168 (VEVLLGASDG…AGMVGQVTVN (99 aa)). Residues His106, Cys153, His156, and Met161 each coordinate Cu cation.

The protein belongs to the plastocyanin family. Requires Cu(2+) as cofactor.

The protein localises to the plastid. The protein resides in the chloroplast thylakoid membrane. Its function is as follows. Participates in electron transfer between P700 and the cytochrome b6-f complex in photosystem I. The protein is Plastocyanin, chloroplastic (PETE) of Pisum sativum (Garden pea).